We begin with the raw amino-acid sequence, 313 residues long: Protein KRE1 (313 aa).

The first 26 residues, 1-26, serve as a signal peptide directing secretion; the sequence is MMRRTLLHSFATLLLSLSLWSAAVMA. Repeat unit 1 spans residues 72 to 86; that stretch reads TTTNDVGTTVTLTQT. The tract at residues 72-141 is 2 X approximate repeats; that stretch reads TTTNDVGTTV…LGTTVTLTQT (70 aa). The interval 94–114 is disordered; the sequence is PTTTTSTSSTGKTTTTVPTAT. Residues 127–141 form repeat 2; that stretch reads TTTNDLGTTVTLTQT. Low complexity predominate over residues 147-181; the sequence is TSATSSASSSVSSSVSSSGSSSSVKTTTSTGSAVA. Residues 147–198 are disordered; that stretch reads TSATSSASSSVSSSVSSSGSSSSVKTTTSTGSAVAETGTRPDPSTDFTEPPV. Asn288 carries the GPI-anchor amidated asparagine lipid modification. Residues 289 to 313 constitute a propeptide, removed in mature form; sequence EAQHLGMSSFTSILGGLLTVLIWFL.

This sequence belongs to the KRE1 family. Extensively modified; probably through addition of O-linked mannose residues. In terms of processing, the GPI-anchor is attached to the protein in the endoplasmic reticulum and serves to target the protein to the cell surface. There, the glucosamine-inositol phospholipid moiety is cleaved off and the GPI-modified mannoprotein is covalently attached via its lipidless GPI glycan remnant to the 1,6-beta-glucan of the outer cell wall layer.

The protein localises to the cell membrane. It is found in the secreted. The protein resides in the cell wall. Its function is as follows. Involved in a late stage of cell wall 1,6-beta-glucan synthesis and assembly. Has a structural, rather than enzymic, function within cell wall 1,6-beta-glucan assembly and architecture, possibly by being involved in covalently cross-linking 1,6-beta-glucans to other cell wall components such as 1,3-beta-glucan, chitin and certain mannoproteins. Acts as the plasma membrane receptor for the yeast K1 viral toxin. The sequence is that of Protein KRE1 (KRE1) from Saccharomyces cerevisiae (strain ATCC 204508 / S288c) (Baker's yeast).